A 362-amino-acid polypeptide reads, in one-letter code: Chalcone synthase A (362 aa).

Cys-168 is an active-site residue.

Belongs to the thiolase-like superfamily. Chalcone/stilbene synthases family.

It carries out the reaction (E)-4-coumaroyl-CoA + 3 malonyl-CoA + 3 H(+) = 2',4,4',6'-tetrahydroxychalcone + 3 CO2 + 4 CoA. The protein operates within secondary metabolite biosynthesis; flavonoid biosynthesis. Functionally, the primary product of this enzyme is 4,2',4',6'-tetrahydroxychalcone (also termed naringenin-chalcone or chalcone) which can under specific conditions spontaneously isomerize into naringenin. This is Chalcone synthase A (CHSA) from Ipomoea triloba (Trilobed morning glory).